The primary structure comprises 444 residues: Proline--tRNA ligase (444 aa).

This sequence belongs to the class-II aminoacyl-tRNA synthetase family. ProS type 2 subfamily. As to quaternary structure, homodimer.

The protein resides in the cytoplasm. The catalysed reaction is tRNA(Pro) + L-proline + ATP = L-prolyl-tRNA(Pro) + AMP + diphosphate. In terms of biological role, catalyzes the attachment of proline to tRNA(Pro) in a two-step reaction: proline is first activated by ATP to form Pro-AMP and then transferred to the acceptor end of tRNA(Pro). This Pelagibacter ubique (strain HTCC1062) protein is Proline--tRNA ligase.